We begin with the raw amino-acid sequence, 427 residues long: 12-alpha,13-alpha-dihydroxyfumitremorgin C prenyltransferase (427 aa).

Glu-94 lines the substrate pocket. Positions 105, 192, 194, 268, 353, 355, 419, and 423 each coordinate dimethylallyl diphosphate.

Belongs to the tryptophan dimethylallyltransferase family.

It carries out the reaction 12alpha,13alpha-dihydroxyfumitremorgin C + dimethylallyl diphosphate = fumitremorgin B + diphosphate. Its pathway is mycotoxin biosynthesis. Its function is as follows. 12-alpha,13-alpha-dihydroxyfumitremorgin C prenyltransferase; part of the gene cluster that mediates the biosynthesis of fumitremorgins, indole alkaloids that carry not only intriguing chemical structures, but also interesting biological and pharmacological activities. The biosynthesis of fumitremorgin-type alkaloids begins by condensation of the two amino acids L-tryptophan and L-proline to brevianamide F, catalyzed by the non-ribosomal peptide synthetase ftmA. Brevianamide F is then prenylated by the prenyltransferase ftmPT1/ftmB in the presence of dimethylallyl diphosphate, resulting in the formation of tryprostatin B. The three cytochrome P450 monooxygenases, ftmP450-1/ftmC, ftmP450-2/ftmE and ftmP450-3/FtmG, are responsible for the conversion of tryprostatin B to 6-hydroxytryprostatin B, tryprostatin A to fumitremorgin C and fumitremorgin C to 12,13-dihydroxyfumitremorgin C, respectively. The putative methyltransferase ftmMT/ftmD is expected for the conversion of 6-hydroxytryprostatin B to tryprostatin A. FtmPT2/FtmH catalyzes the prenylation of 12,13-dihydroxyfumitre-morgin C in the presence of dimethylallyl diphosphate, resulting in the formation of fumitremorgin B. Fumitremorgin B is further converted to verruculogen by ftmOx1/ftmF via the insertion of an endoperoxide bond between the two prenyl moieties. In some fungal species, verruculogen is further converted to fumitremorgin A, but the enzymes involved in this step have not been identified yet. The polypeptide is 12-alpha,13-alpha-dihydroxyfumitremorgin C prenyltransferase (Aspergillus fumigatus (strain ATCC MYA-4609 / CBS 101355 / FGSC A1100 / Af293) (Neosartorya fumigata)).